We begin with the raw amino-acid sequence, 465 residues long: MKVYNTLTNKKEEFVTLVPGEVKMYVCGPTVYNFFHIGNARTFVVFDTIRRYLEYRGYKVKFIQNFTDIDDKMIKRANEEGSTVKELGDRFIKEYYKDADDLNIERATKNPRATEFMEEIIKFVSDLIEKGYAYEIDGDVYFSTKKFNSYGKLSGQNLEELQLGSRINVDERKKDPMDFAIWKNQKPGEPAWESPWGMGRPGWHIECSCMAYNLLGETIDIHAGGSDLSFPHHENEIAQSEARTGKQFAKYWLHSAFVNVNNQKMSKSLNNFFTAREILEKYDADVLRMFMLSGHYRTQINFSMELLDSTKAALDRLYNSINNLENLLDEVKNEELRDEELEYKNELQKYKEKYIEKMDDDFNTADAISVIFDLIRDVNTNVTIESSKELVKYTLDLIRELGNPLGILQESTKASLEEEIEKLIEERQKARKEKNWALADKIRDDLKERGIVLEDTPQGVRWKQI.

C27 is a Zn(2+) binding site. Positions 29–39 (PTVYNFFHIGN) match the 'HIGH' region motif. Residues C207, H232, and E236 each contribute to the Zn(2+) site. Residues 264 to 268 (KMSKS) carry the 'KMSKS' region motif. K267 provides a ligand contact to ATP.

The protein belongs to the class-I aminoacyl-tRNA synthetase family. As to quaternary structure, monomer. Requires Zn(2+) as cofactor.

It is found in the cytoplasm. It carries out the reaction tRNA(Cys) + L-cysteine + ATP = L-cysteinyl-tRNA(Cys) + AMP + diphosphate. This is Cysteine--tRNA ligase from Clostridium botulinum (strain Loch Maree / Type A3).